We begin with the raw amino-acid sequence, 89 residues long: Small ribosomal subunit protein uS15 (89 aa).

The protein belongs to the universal ribosomal protein uS15 family. As to quaternary structure, part of the 30S ribosomal subunit. Forms a bridge to the 50S subunit in the 70S ribosome, contacting the 23S rRNA.

One of the primary rRNA binding proteins, it binds directly to 16S rRNA where it helps nucleate assembly of the platform of the 30S subunit by binding and bridging several RNA helices of the 16S rRNA. Its function is as follows. Forms an intersubunit bridge (bridge B4) with the 23S rRNA of the 50S subunit in the ribosome. This is Small ribosomal subunit protein uS15 from Pseudomonas fluorescens (strain ATCC BAA-477 / NRRL B-23932 / Pf-5).